A 369-amino-acid chain; its full sequence is Gibberellin 3-beta-dioxygenase 2-3 (369 aa).

The 102-residue stretch at 205–306 (MTATMHLNWY…RISLGYFLGP (102 aa)) folds into the Fe2OG dioxygenase domain. Residues His229, Asp231, and His287 each coordinate Fe cation. Arg297 is an active-site residue.

Belongs to the iron/ascorbate-dependent oxidoreductase family. GA3OX subfamily. It depends on L-ascorbate as a cofactor. The cofactor is Fe cation.

The catalysed reaction is gibberellin A20 + 2-oxoglutarate + O2 = gibberellin A1 + succinate + CO2. Converts the inactive gibberellin precursors GA9 and GA20 in the bioactives gibberellins GA4 and GA1. This is Gibberellin 3-beta-dioxygenase 2-3 (GA3ox2-3) from Triticum aestivum (Wheat).